The sequence spans 641 residues: FACT complex subunit SSRP1-A (641 aa).

The disordered stretch occupies residues 459 to 561 (TDDDAVDPHL…DPNAPKRAMT (103 aa)). A compositionally biased stretch (acidic residues) spans 476–487 (GDEESDEEDEDF). Over residues 512–524 (GGEKEKLSKKEAS) the composition is skewed to basic and acidic residues. Residues 556–624 (PKRAMTPFMY…RYEKESAVYR (69 aa)) constitute a DNA-binding region (HMG box).

It belongs to the SSRP1 family. In terms of assembly, component of the FACT complex, a stable heterodimer of SPT16 and SSRP1.

It localises to the nucleus. It is found in the chromosome. Functionally, component of the FACT complex, a general chromatin factor that acts to reorganize nucleosomes. The FACT complex is involved in multiple processes that require DNA as a template such as mRNA elongation, DNA replication and DNA repair. During transcription elongation the FACT complex acts as a histone chaperone that both destabilizes and restores nucleosomal structure. It facilitates the passage of RNA polymerase II and transcription by promoting the dissociation of one histone H2A-H2B dimer from the nucleosome, then subsequently promotes the reestablishment of the nucleosome following the passage of RNA polymerase II. Binds specifically to double-stranded DNA. The polypeptide is FACT complex subunit SSRP1-A (SSRP1-A) (Oryza sativa subsp. japonica (Rice)).